A 193-amino-acid polypeptide reads, in one-letter code: Potassium-transporting ATPase KdpC subunit (193 aa).

Residues 14–34 (ITFTFLVLCGLVYPLIVTGIA) traverse the membrane as a helical segment.

It belongs to the KdpC family. The system is composed of three essential subunits: KdpA, KdpB and KdpC.

It is found in the cell membrane. Functionally, part of the high-affinity ATP-driven potassium transport (or Kdp) system, which catalyzes the hydrolysis of ATP coupled with the electrogenic transport of potassium into the cytoplasm. This subunit acts as a catalytic chaperone that increases the ATP-binding affinity of the ATP-hydrolyzing subunit KdpB by the formation of a transient KdpB/KdpC/ATP ternary complex. The chain is Potassium-transporting ATPase KdpC subunit from Bacillus cereus (strain Q1).